A 1214-amino-acid chain; its full sequence is MVVSAGPWSSEKAETNILEINEKLRPQLAENKQQFRNLKEKCFVTQLAGFLANRQKKYKYEECKDLIKFMLRNERQFKEEKLAEQLKQAEELRQYKVLVHSQERELTQLREKLREGRDASRSLNQHLQALLTPDKPDKSQGQDLQEQLAEGCRLAQQLFQKLSPENDEDEDEDVQVEEAEKVLESSAPREVQKAEESKVPEDSLEECAITCSNSHSPCDSNQPHKNINITFEEDKVNSTLVVDRESSHDECQDAVNILPVPGPTSSATNVSMVVSAGPLSSEKAEMNILEINEKLHPQLAEKKQQFRNLKEKCFVTQLACFLANQQNKYKYEECKDLIKSMLRNERQFKEEKLAEQLKQAEELRQYKVLVHSQERELTQLREKLREGRDASRSLNQHLQALLTPDKPDKSQGQDLQEQLAEGCRLAQQLFQKLSPENDEDEDEDVQVEEAEKVLESSAPREVQKAEESKVPEDSLEECAITCSNSHGPCDSNQPHKNINITFEEDKVNSALVVDRESSHDECQDAVNILPVPGPTSSATNVSMVVSAGPLSSEKAEMNILEINEKLHPQLAEKKQQFRNLKEKCFVTQLACFLANQQNKYKNEECKDLIKSMLRNERQFKEEKLAEQLKQAEELRQYKVLVHSQERELTQLREKLREGRDASCSLNQHLQALLTPDEPDKSQGQDLQEQLAEGCRLAQHLVQKLSPENDNDDDEDVQVEVAEKVQKSSAPREMPKAEEKEVPEDSLEECAITCSNSHGPYDSNQPHRKTKITFEEDKVDSTLIGSSSHVEWEDAVHIIPENESDDEEEEEKGPVSPRNLQESEEEEVPQESWDEGYSTLSIPPEMLASYKSYSGTFHSLEEQQVCMAVDIGGHRWDQVKKEDQEATGPRLSRELLDEKGPEVLQDSLDRCYSTPSGYLELTDSCQPYRSAFYILEQQRVGWALDMDEIEKYQEVEEDQDPSCPRLSRELLDEKEPEVLQDSLDRCYSTPSGYLELPDLGQPYRSAVYSLEEQYLGLALDVDRIKKDQEEEEDQGPPCPRLSRELLEAVEPEVLQDSLDRCYSTPSSCLEQPDSCLPYGSSFYALEEKHVGFSLDVGEIEKKGKGKKRRGRRSTKKRRRRGRKEGEEDQNPPCPRLSGMLMEVEEPEVLQDSLDRCYSTPSMYFELPDSFQHYRSVFYSFEEQHISFALDVDNRFLTLMGTSLHLVFQMGVIFPQ.

Residues 70 to 128 (MLRNERQFKEEKLAEQLKQAEELRQYKVLVHSQERELTQLREKLREGRDASRSLNQHLQ) adopt a coiled-coil conformation. The interval 162 to 200 (LSPENDEDEDEDVQVEEAEKVLESSAPREVQKAEESKVP) is disordered. The span at 165–177 (ENDEDEDEDVQVE) shows a compositional bias: acidic residues. Positions 165–259 (ENDEDEDEDV…ECQDAVNILP (95 aa)) constitute an Olduvai 1 domain. Residues 190–200 (EVQKAEESKVP) are compositionally biased toward basic and acidic residues. The stretch at 292 to 399 (NEKLHPQLAE…ASRSLNQHLQ (108 aa)) forms a coiled coil. A disordered region spans residues 433–471 (LSPENDEDEDEDVQVEEAEKVLESSAPREVQKAEESKVP). Residues 436-448 (ENDEDEDEDVQVE) show a composition bias toward acidic residues. Residues 436 to 530 (ENDEDEDEDV…ECQDAVNILP (95 aa)) form the Olduvai 2 domain. Residues 461–471 (EVQKAEESKVP) show a composition bias toward basic and acidic residues. The stretch at 610–670 (KSMLRNERQF…ASCSLNQHLQ (61 aa)) forms a coiled coil. Olduvai domains are found at residues 707-799 (ENDN…HIIP), 800-888 (ENES…ATGP), 891-946 (SREL…LDMD), 947-1038 (EIEK…PPCP), 1041-1114 (SREL…RSTK), and 1116-1214 (RRRR…IFPQ). Disordered regions lie at residues 722–746 (EKVQ…EDSL) and 791–837 (WEDA…EGYS). 2 stretches are compositionally biased toward acidic residues: residues 801–810 (NESDDEEEEE) and 821–833 (ESEE…ESWD). Residues 1102–1121 (GKGKKRRGRRSTKKRRRRGR) show a composition bias toward basic residues. Residues 1102–1136 (GKGKKRRGRRSTKKRRRRGRKEGEEDQNPPCPRLS) are disordered.

Belongs to the NBPF family. In terms of tissue distribution, widely expressed. The only tissue which shows a weak expression is kidney.

It is found in the cytoplasm. The sequence is that of NBPF family member NBPF1 from Homo sapiens (Human).